We begin with the raw amino-acid sequence, 292 residues long: Undecaprenyl-diphosphatase (292 aa).

The next 7 membrane-spanning stretches (helical) occupy residues 1–21 (MSLV…FLPV), 46–66 (FVTI…RADI), 90–110 (LGWY…LLEH), 114–134 (ALGN…LLAA), 192–212 (FLLS…STVP), 225–245 (VVGT…LLAW), and 253–273 (VFVV…LSGV).

It belongs to the UppP family.

It is found in the cell inner membrane. The enzyme catalyses di-trans,octa-cis-undecaprenyl diphosphate + H2O = di-trans,octa-cis-undecaprenyl phosphate + phosphate + H(+). Catalyzes the dephosphorylation of undecaprenyl diphosphate (UPP). Confers resistance to bacitracin. The chain is Undecaprenyl-diphosphatase from Anaeromyxobacter sp. (strain K).